Consider the following 163-residue polypeptide: Nucleotide-binding protein ROP_16630 (163 aa).

It belongs to the YajQ family.

Nucleotide-binding protein. This Rhodococcus opacus (strain B4) protein is Nucleotide-binding protein ROP_16630.